We begin with the raw amino-acid sequence, 343 residues long: Phospholipid phosphatase-related protein type 2 (343 aa).

The next 3 membrane-spanning stretches (helical) occupy residues 12-32, 69-89, and 129-149; these read FSIIPCFVFVESVLLGIVILL, VPPALVYALVTAGPTLTILLG, and FLGVYSFGLFTTTIFANAGQV. The N-linked (GlcNAc...) asparagine glycan is linked to N165. The next 3 membrane-spanning stretches (helical) occupy residues 210–230, 239–259, and 266–286; these read AALCAYAVTYTAMYVTLVFRV, SLCLALLCPAFLVGVVRVAEY, and VLAGFLTGAAIATFLVTCVVH. Residues 290–343 are disordered; sequence SRPPSGRRLSPWEDLGQAPTMDSPLEKNPRSAGRIRHRHGSPHPSRRTAPAVAT. Phosphoserine occurs at positions 299 and 312. A compositionally biased stretch (basic residues) spans 322 to 335; the sequence is GRIRHRHGSPHPSR.

It belongs to the PA-phosphatase related phosphoesterase family.

The protein resides in the membrane. The chain is Phospholipid phosphatase-related protein type 2 from Homo sapiens (Human).